The primary structure comprises 257 residues: Cyclin-C1-1 (257 aa).

The protein belongs to the cyclin family. Cyclin C subfamily.

The chain is Cyclin-C1-1 from Oryza sativa subsp. japonica (Rice).